Reading from the N-terminus, the 812-residue chain is Fibrous sheath CABYR-binding protein (812 aa).

Residues 1–66 (MEESDEPEQP…SIGNIPGGKA (66 aa)) form a disordered region. 6 positions are modified to phosphoserine: serine 25, serine 57, serine 125, serine 133, serine 184, and serine 273. Disordered regions lie at residues 269–333 (IQAP…PKGT), 367–388 (DSGR…PPLS), 424–547 (FEDQ…PPSL), and 672–741 (PAEE…PSVK). Low complexity predominate over residues 275 to 286 (AKETSAAETTAK). Positions 488–501 (EVPPLPTEEWPLPP) are enriched in pro residues. Residues 502–513 (VTEESPAEVTPP) are compositionally biased toward low complexity. Positions 514-528 (ETEEGPIEPAEEGPE) are enriched in acidic residues.

In terms of assembly, interacts with CABYR.

The protein localises to the cell projection. It localises to the cilium. The protein resides in the flagellum. May be involved in the later stages of fibrous sheath biogenesis. Binds calcium. In Rattus norvegicus (Rat), this protein is Fibrous sheath CABYR-binding protein.